The following is a 229-amino-acid chain: UPF0758 protein CA_C1241 (229 aa).

The MPN domain maps to 107–229 (KITSPKEAAN…YISLKEEGLL (123 aa)). The Zn(2+) site is built by His-178, His-180, and Asp-191. The JAMM motif signature appears at 178 to 191 (HNHPSGDPKPSNED).

The protein belongs to the UPF0758 family.

This is UPF0758 protein CA_C1241 from Clostridium acetobutylicum (strain ATCC 824 / DSM 792 / JCM 1419 / IAM 19013 / LMG 5710 / NBRC 13948 / NRRL B-527 / VKM B-1787 / 2291 / W).